A 283-amino-acid polypeptide reads, in one-letter code: Phosphatidylglycerol--prolipoprotein diacylglyceryl transferase (283 aa).

Transmembrane regions (helical) follow at residues 20–40 (LGPV…FVAM), 51–71 (GGNP…GIIG), 97–117 (ITNG…AVYF), and 123–143 (GVAF…AQAI). R145 provides a ligand contact to a 1,2-diacyl-sn-glycero-3-phospho-(1'-sn-glycerol). The next 2 helical transmembrane spans lie at 192 to 212 (VHPT…VLLW) and 255 to 275 (INVI…FALR).

Belongs to the Lgt family.

It is found in the cell membrane. The catalysed reaction is L-cysteinyl-[prolipoprotein] + a 1,2-diacyl-sn-glycero-3-phospho-(1'-sn-glycerol) = an S-1,2-diacyl-sn-glyceryl-L-cysteinyl-[prolipoprotein] + sn-glycerol 1-phosphate + H(+). It participates in protein modification; lipoprotein biosynthesis (diacylglyceryl transfer). Its function is as follows. Catalyzes the transfer of the diacylglyceryl group from phosphatidylglycerol to the sulfhydryl group of the N-terminal cysteine of a prolipoprotein, the first step in the formation of mature lipoproteins. This is Phosphatidylglycerol--prolipoprotein diacylglyceryl transferase from Corynebacterium diphtheriae (strain ATCC 700971 / NCTC 13129 / Biotype gravis).